A 379-amino-acid chain; its full sequence is Bifunctional enzyme IspD/IspF (379 aa).

Residues 1–213 (MSQVSLVVMG…QGFEPPFGGC (213 aa)) are 2-C-methyl-D-erythritol 4-phosphate cytidylyltransferase. The tract at residues 214-379 (YGGSGFDVHA…DWTKHACFNR (166 aa)) is 2-C-methyl-D-erythritol 2,4-cyclodiphosphate synthase. A divalent metal cation-binding residues include D220 and H222. 4-CDP-2-C-methyl-D-erythritol 2-phosphate contacts are provided by residues 220–222 (DVH) and 246–247 (HS). Position 254 (H254) interacts with a divalent metal cation. Residues 268–270 (DIG), 273–277 (FPDSD), 344–347 (TTTE), F351, and R354 contribute to the 4-CDP-2-C-methyl-D-erythritol 2-phosphate site.

It in the N-terminal section; belongs to the IspD/TarI cytidylyltransferase family. IspD subfamily. This sequence in the C-terminal section; belongs to the IspF family. A divalent metal cation serves as cofactor.

The enzyme catalyses 2-C-methyl-D-erythritol 4-phosphate + CTP + H(+) = 4-CDP-2-C-methyl-D-erythritol + diphosphate. The catalysed reaction is 4-CDP-2-C-methyl-D-erythritol 2-phosphate = 2-C-methyl-D-erythritol 2,4-cyclic diphosphate + CMP. Its pathway is isoprenoid biosynthesis; isopentenyl diphosphate biosynthesis via DXP pathway; isopentenyl diphosphate from 1-deoxy-D-xylulose 5-phosphate: step 2/6. The protein operates within isoprenoid biosynthesis; isopentenyl diphosphate biosynthesis via DXP pathway; isopentenyl diphosphate from 1-deoxy-D-xylulose 5-phosphate: step 4/6. Functionally, bifunctional enzyme that catalyzes the formation of 4-diphosphocytidyl-2-C-methyl-D-erythritol from CTP and 2-C-methyl-D-erythritol 4-phosphate (MEP) (IspD), and catalyzes the conversion of 4-diphosphocytidyl-2-C-methyl-D-erythritol 2-phosphate (CDP-ME2P) to 2-C-methyl-D-erythritol 2,4-cyclodiphosphate (ME-CPP) with a corresponding release of cytidine 5-monophosphate (CMP) (IspF). This is Bifunctional enzyme IspD/IspF from Wolinella succinogenes (strain ATCC 29543 / DSM 1740 / CCUG 13145 / JCM 31913 / LMG 7466 / NCTC 11488 / FDC 602W) (Vibrio succinogenes).